We begin with the raw amino-acid sequence, 259 residues long: Methyltransferase sdnD (259 aa).

Belongs to the FkbM methyltransferase family.

Its pathway is antibiotic biosynthesis. Functionally, methyltransferase; part of the gene cluster that mediates the biosynthesis of sordarin and hypoxysordarin, glycoside antibiotics with a unique tetracyclic diterpene aglycone structure. First, the geranylgeranyl diphosphate synthase sdnC constructs GGDP from farnesyl diphosphate and isopentenyl diphosphate. The diterpene cyclase sdnA then catalyzes the cyclization of GGDP to afford cycloaraneosene. Cycloaraneosene is then hydroxylated four times by the putative cytochrome P450 monooxygenases sdnB, sdnE, sdnF and sdnH to give a hydroxylated cycloaraneosene derivative such as cycloaraneosene-8,9,13,19-tetraol. Although the order of the hydroxylations is unclear, at least C8, C9 and C13 of the cycloaraneosene skeleton are hydroxylated before the sordaricin formation. Dehydration of the 13-hydroxy group of the hydroxylated cycloaraneosene derivative might be catalyzed by an unassigned hypothetical protein such as sdnG and sdnP to construct the cyclopentadiene moiety. The FAD-dependent oxidoreductase sdnN is proposed to catalyze the oxidation at C9 of the hydroxylated cycloaraneosene derivative and also catalyze the Baeyer-Villiger oxidation to give the lactone intermediate. The presumed lactone intermediate would be hydrolyzed to give an acrolein moiety and a carboxylate moiety. Then, [4+2]cycloaddition would occur between the acrolein moiety and the cyclopentadiene moiety to give sordaricin. SdnN might also be involved in the [4+2]cycloaddition after the hypothesized oxidation to accommodate the oxidized product and prompt the [4+2]cycloaddition. GDP-6-deoxy-D-altrose may be biosynthesized from GDP-D-mannose by the putative GDP-mannose-4,6-dehydratase sdnI and the short-chain dehydrogenase sdnK. The glycosyltransferase sdnJ catalyzes the attachment of 6-deoxy-D-altrose onto the 19-hydroxy group of sordaricin to give 4'-O-demethylsordarin. The methyltransferase sdnD would complete the biosynthesis of sordarin. Sordarin can be further modified into hypoxysordarin. The unique acyl chain at the 3'-hydroxy group of hypoxysordarin would be constructed by an iterative type I PKS sdnO and the trans-acting polyketide methyltransferase sdnL. SdnL would be responsible for the introduction of an alpha-methyl group of the polyketide chain. Alternatively, the beta-lactamase-like protein sdnR might be responsible for the cleavage and transfer of the polyketide chain from the PKS sdnO to sordarin. Two putative cytochrome P450 monooxygenases, sdnQ and sdnT, might catalyze the epoxidations of the polyketide chain to complete the biosynthesis of hypoxysordarin. Transcriptional regulators sdnM and sdnS are presumably encoded for the transcriptional regulation of the expression of the sdn gene cluster. This Sordaria araneosa (Pleurage araneosa) protein is Methyltransferase sdnD.